Reading from the N-terminus, the 224-residue chain is Giant hemoglobin linker AV-1 chain (224 aa).

An LDL-receptor class A domain is found at 62–103 (HWCPSKYHRCGNSPQCMSNMAFCDGVNDCKNHFDEDENRCVV). 3 disulfides stabilise this stretch: C64–C77, C71–C90, and C84–C101. Residue N108 is glycosylated (N-linked (GlcNAc...) asparagine).

As to quaternary structure, giant hemoglobin is composed of four heme-containing chains (AI to AIV), and two linker chains (AV and AVI).

In terms of biological role, acts as a linker for the assembly of heme-containing chains in the construction of giant hemoglobin. The chain is Giant hemoglobin linker AV-1 chain from Lamellibrachia sp. (Deep-sea giant tube worm).